The sequence spans 183 residues: Hypoxanthine/guanine phosphoribosyltransferase (183 aa).

The protein belongs to the purine/pyrimidine phosphoribosyltransferase family. Archaeal HPRT subfamily. As to quaternary structure, homodimer.

It localises to the cytoplasm. It catalyses the reaction IMP + diphosphate = hypoxanthine + 5-phospho-alpha-D-ribose 1-diphosphate. The catalysed reaction is GMP + diphosphate = guanine + 5-phospho-alpha-D-ribose 1-diphosphate. It participates in purine metabolism; IMP biosynthesis via salvage pathway; IMP from hypoxanthine: step 1/1. Functionally, catalyzes a salvage reaction resulting in the formation of IMP that is energically less costly than de novo synthesis. This is Hypoxanthine/guanine phosphoribosyltransferase from Methanocaldococcus jannaschii (strain ATCC 43067 / DSM 2661 / JAL-1 / JCM 10045 / NBRC 100440) (Methanococcus jannaschii).